Consider the following 143-residue polypeptide: uncharacterized protein (143 aa).

Residues 4–24 form a helical membrane-spanning segment; the sequence is FGIVALSIICSIAFLFVAYGV. Residues 97 to 143 form a disordered region; sequence TVPFVNTEAPPPRLSSSFSRQSGENAETQSQVSASPFNDKNSPYVQE. Polar residues predominate over residues 110 to 143; sequence LSSSFSRQSGENAETQSQVSASPFNDKNSPYVQE.

The protein resides in the golgi apparatus membrane. This is an uncharacterized protein from Schizosaccharomyces pombe (strain 972 / ATCC 24843) (Fission yeast).